The following is a 347-amino-acid chain: Isopentenyl-diphosphate delta-isomerase (347 aa).

Position 11–12 (11–12 (RK)) interacts with substrate. FMN is bound by residues 72-74 (AMT), Ser102, and Asn131. Substrate is bound at residue Gln161. Glu162 is a binding site for Mg(2+). Residues Lys192, Thr222, and 287–288 (AG) each bind FMN.

This sequence belongs to the IPP isomerase type 2 family. Homooctamer. Dimer of tetramers. Requires FMN as cofactor. The cofactor is NADPH. Mg(2+) is required as a cofactor.

Its subcellular location is the cytoplasm. It catalyses the reaction isopentenyl diphosphate = dimethylallyl diphosphate. Its function is as follows. Involved in the biosynthesis of isoprenoids. Catalyzes the 1,3-allylic rearrangement of the homoallylic substrate isopentenyl (IPP) to its allylic isomer, dimethylallyl diphosphate (DMAPP). This Lactococcus lactis subsp. lactis (strain IL1403) (Streptococcus lactis) protein is Isopentenyl-diphosphate delta-isomerase.